A 74-amino-acid chain; its full sequence is Conotoxin MiK41 (74 aa).

The signal sequence occupies residues 1-22 (MKLTCVLIITVLFLTACQLTTA). Residues 23-45 (VTYSRGEHKHRALMSTGTNYRLP) constitute a propeptide that is removed on maturation. Disulfide bonds link C48–C62, C55–C66, and C61–C73.

This sequence belongs to the conotoxin O1 superfamily. Expressed by the venom duct.

It is found in the secreted. This Conus miles (Soldier cone) protein is Conotoxin MiK41.